The chain runs to 357 residues: Peptide chain release factor 1 (357 aa).

An N5-methylglutamine modification is found at glutamine 236.

This sequence belongs to the prokaryotic/mitochondrial release factor family. In terms of processing, methylated by PrmC. Methylation increases the termination efficiency of RF1.

The protein localises to the cytoplasm. Its function is as follows. Peptide chain release factor 1 directs the termination of translation in response to the peptide chain termination codons UAG and UAA. In Mycobacterium sp. (strain JLS), this protein is Peptide chain release factor 1.